Reading from the N-terminus, the 91-residue chain is Small ribosomal subunit protein bS20 (91 aa).

Residues 1 to 18 are compositionally biased toward basic and acidic residues; it reads MPLHKSAEKRLRQSDRKN. The disordered stretch occupies residues 1 to 25; sequence MPLHKSAEKRLRQSDRKNARNRARK.

It belongs to the bacterial ribosomal protein bS20 family.

Functionally, binds directly to 16S ribosomal RNA. In Chlorobium phaeovibrioides (strain DSM 265 / 1930) (Prosthecochloris vibrioformis (strain DSM 265)), this protein is Small ribosomal subunit protein bS20.